A 193-amino-acid polypeptide reads, in one-letter code: Zinc finger CCHC domain-containing protein 17 (193 aa).

The 40-residue stretch at 1-40 (MSSCRVDKPSEIVDVGDKVWVKLIGREMKNDRIKVSLSMK) folds into the S1 motif; truncated domain. At S66 the chain carries Phosphoserine. The CCHC-type zinc-finger motif lies at 83 to 100 (TTCKKCGCKGHFAKDCFM). N6-acetyllysine is present on K96. The disordered stretch occupies residues 113–193 (EEEEKEEAKS…KKKHKKKHKE (81 aa)). Basic and acidic residues predominate over residues 118 to 129 (EEAKSAEFEKPV). Positions 134-150 (PSRKRKKEKKKKKHRDR) are enriched in basic residues. At S135 the chain carries Phosphoserine. Residues 163–177 (DTGKRARHTSKDSKA) show a composition bias toward basic and acidic residues. Positions 178-193 (AKKKKKKKKHKKKHKE) are enriched in basic residues.

May interact with PNN. May associate with the 60 S ribosomal subunit.

It localises to the nucleus. Its subcellular location is the nucleolus. This is Zinc finger CCHC domain-containing protein 17 (ZCCHC17) from Macaca fascicularis (Crab-eating macaque).